We begin with the raw amino-acid sequence, 488 residues long: MQYRDLRDFIRILEQRGELKRITAEVDPHLEMTEICDRTLRREGPALLFENPRGYSIPVLGNLFGTPGRVALGMGAESVESLREIGKLLAFLKEPEPPKGLRDAWSKLPIFKQVMNMGPKEVSSASCQEVIIEGDDVDLYQYPIQTCWPGDAGPLVTWPLVITRGPNKARQNLGIYRQQLIGRNKLIMRWLSHRGGALDYREWREAHPMEPFPVAVALGADPATILGAVTPVPDTLSEYAFAGLLRGNKTEVVRCIGSDLQAPASAEIVLEGVIHPGEMAPEGPFGDHTGYYNEVDRFPVFTVERITQRKKPIYHSTYTGRPPDEPAVLGVALNEVFVPILQKQFPEIVDFYLPPEGCSYRMAVVTMKKQYPGHAKRVMMGVWSFLRQFMYTKFVIVTDDDVNARDWKDVIWAITTRMDPARDTVMVENTPIDYLDFASPVSGLGSKMGLDATNKWPGETQREWGRTIQMDADVKARVDDLWSQLGID.

Residue Asn172 coordinates Mn(2+). Prenylated FMN is bound by residues 175–177 (IYR), 189–191 (RWL), and 194–195 (RG). Residue Glu238 participates in Mn(2+) binding. Asp287 serves as the catalytic Proton donor.

It belongs to the UbiD family. Homohexamer. Prenylated FMN is required as a cofactor. The cofactor is Mn(2+).

It localises to the cell membrane. The catalysed reaction is a 4-hydroxy-3-(all-trans-polyprenyl)benzoate + H(+) = a 2-(all-trans-polyprenyl)phenol + CO2. It functions in the pathway cofactor biosynthesis; ubiquinone biosynthesis. In terms of biological role, catalyzes the decarboxylation of 3-octaprenyl-4-hydroxy benzoate to 2-octaprenylphenol, an intermediate step in ubiquinone biosynthesis. The chain is 3-octaprenyl-4-hydroxybenzoate carboxy-lyase from Hahella chejuensis (strain KCTC 2396).